Reading from the N-terminus, the 147-residue chain is Ribonuclease H (147 aa).

The 142-residue stretch at 1–142 (MAGKVVMYTD…ADELANRGVR (142 aa)) folds into the RNase H type-1 domain. 4 residues coordinate Mg(2+): aspartate 10, glutamate 48, aspartate 70, and aspartate 134.

It belongs to the RNase H family. In terms of assembly, monomer. The cofactor is Mg(2+).

Its subcellular location is the cytoplasm. The enzyme catalyses Endonucleolytic cleavage to 5'-phosphomonoester.. Functionally, endonuclease that specifically degrades the RNA of RNA-DNA hybrids. The protein is Ribonuclease H of Marinobacter nauticus (strain ATCC 700491 / DSM 11845 / VT8) (Marinobacter aquaeolei).